The following is a 156-amino-acid chain: Histone acetyltransferase HPA2 (156 aa).

Positions 9–156 (ITVRFVTEND…PKILYKRKGY (148 aa)) constitute an N-acetyltransferase domain. 93–106 (LYVDENSRVKGAGG) is a binding site for acetyl-CoA.

The protein belongs to the acetyltransferase family. GNAT subfamily. As to quaternary structure, forms homodimers in the absence, and homotetramers in the presence of acetyl-CoA. In terms of processing, autoacetylates in an intermolecular reaction.

It carries out the reaction L-lysyl-[protein] + acetyl-CoA = N(6)-acetyl-L-lysyl-[protein] + CoA + H(+). Its function is as follows. N-acetyltransferase that acetylates histone H3 at 'Lys-14' and histone H4 at 'Lys-5' and 'Lys-12'. Also acetylates polyamines like putrescine, spermidine and spermine, and certain other small basic proteins like nuclear HMG proteins. The sequence is that of Histone acetyltransferase HPA2 from Saccharomyces cerevisiae (strain ATCC 204508 / S288c) (Baker's yeast).